The sequence spans 214 residues: Probable transaldolase (214 aa).

The Schiff-base intermediate with substrate role is filled by lysine 83.

The protein belongs to the transaldolase family. Type 3B subfamily.

It is found in the cytoplasm. It catalyses the reaction D-sedoheptulose 7-phosphate + D-glyceraldehyde 3-phosphate = D-erythrose 4-phosphate + beta-D-fructose 6-phosphate. Its pathway is carbohydrate degradation; pentose phosphate pathway; D-glyceraldehyde 3-phosphate and beta-D-fructose 6-phosphate from D-ribose 5-phosphate and D-xylulose 5-phosphate (non-oxidative stage): step 2/3. Functionally, transaldolase is important for the balance of metabolites in the pentose-phosphate pathway. This Brevibacillus brevis (strain 47 / JCM 6285 / NBRC 100599) protein is Probable transaldolase.